The chain runs to 310 residues: MASWGLLVAGASFTAFRGLHWGLQLLPTPKSVRDRWMWRNIFVSLIHSLLSGVGALVGLWQFPQMVTDPINDHPPWARVLVAVSVGYFAADGVDMLWNQTLAQAWDLLCHHLAVVSCLSTAVVSGHYVGFSMVSLLLELNSICLHLRKLLLLSHKAPSLAFRVSSWASLATLVLFRLLPLGWMSLWLSRQHYQLSLALVLLCVAGLVTVGSISISTGIRILTKDILQSQPYPFILMHKETKTREPVARNTSTLSLKGSRYLYSTAAAALGGHLMVLASPKRCMTPSVLGLQERRLEPGKVAHADNASTWE.

6 helical membrane-spanning segments follow: residues 6–26 (LLVA…LQLL), 40–60 (NIFV…VGLW), 79–99 (VLVA…LWNQ), 117–137 (CLST…SLLL), 167–187 (ASLA…SLWL), and 194–214 (LSLA…SISI). Residues 33–227 (RDRWMWRNIF…IRILTKDILQ (195 aa)) form the TLC domain.

The protein belongs to the TLCD family.

It is found in the cell membrane. Its function is as follows. Regulates the composition and fluidity of the plasma membrane. Inhibits the incorporation of membrane-fluidizing phospholipids containing omega-3 long-chain polyunsaturated fatty acids (LCPUFA) and thereby promotes membrane rigidity. Does not appear to have any effect on LCPUFA synthesis. This Mus musculus (Mouse) protein is TLC domain-containing protein 2 (Tlcd2).